The sequence spans 71 residues: Exodeoxyribonuclease 7 small subunit (71 aa).

Belongs to the XseB family. As to quaternary structure, heterooligomer composed of large and small subunits.

It localises to the cytoplasm. It carries out the reaction Exonucleolytic cleavage in either 5'- to 3'- or 3'- to 5'-direction to yield nucleoside 5'-phosphates.. Functionally, bidirectionally degrades single-stranded DNA into large acid-insoluble oligonucleotides, which are then degraded further into small acid-soluble oligonucleotides. This chain is Exodeoxyribonuclease 7 small subunit, found in Streptococcus thermophilus (strain ATCC BAA-250 / LMG 18311).